The following is a 90-amino-acid chain: MVKNAFISVRVQEKKEKNSGSVEFQVFRFTNTIRRLTSHLELHRKDYSSQRGLRKILEKRQRLLAYLSKKNRVRYKELISKLNIRESKNR.

This sequence belongs to the universal ribosomal protein uS15 family. In terms of assembly, part of the 30S ribosomal subunit.

It localises to the plastid. The protein resides in the chloroplast. This is Small ribosomal subunit protein uS15c (rps15) from Citrus sinensis (Sweet orange).